We begin with the raw amino-acid sequence, 490 residues long: MEIILVTLCLTTLLALLLLKSILKRTTTNNLNLPPSPWRLPVIGNLHQLSLNTHRSLRSLSLRYGPLMLLHFGRTPVLIVSSADVAHDILKTYDVICANRPKTKVIDKILRGGRDVAFAPYGEYWKQMKSICIQNLLSNKMVRSYKKIREDEIKLMIEKVENASSCSPPSPVNLSQLFMTLTNDIICRAALGRKYSSKEDGIDVENIVRAFSALVGEFPIGEYIPSLSWIDKIRGQDHKMEEVDKRFDEFLERVVKEHEDANKDTRSDLVDTLLTIQSDKSALKLIIWDMFLAGTATSLSFLEWAMTELMRNPKVMKKLQEEIRSSSRQGLFVTEKEAEKMDYLQAVIKEALRLRPPAPLMVPRVFSEDVTLKGYNIPAGTQVIINAWAIQRDTTTWGIDAEEFRPERHLDSILDFQGQDFKFIPFGSGKRICPGIGFTSALIGVTLANIVKRFNWRMDVEPQRVQHDLTEATGLVVFRKFPLIAIPSSA.

Residues 3–23 (IILVTLCLTTLLALLLLKSIL) form a helical membrane-spanning segment. C433 lines the heme pocket.

This sequence belongs to the cytochrome P450 family. Heme serves as cofactor.

Its subcellular location is the membrane. The polypeptide is Cytochrome P450 71A19 (CYP71A19) (Arabidopsis thaliana (Mouse-ear cress)).